Consider the following 250-residue polypeptide: 3-deoxy-manno-octulosonate cytidylyltransferase (250 aa).

Belongs to the KdsB family.

It localises to the cytoplasm. The enzyme catalyses 3-deoxy-alpha-D-manno-oct-2-ulosonate + CTP = CMP-3-deoxy-beta-D-manno-octulosonate + diphosphate. It functions in the pathway nucleotide-sugar biosynthesis; CMP-3-deoxy-D-manno-octulosonate biosynthesis; CMP-3-deoxy-D-manno-octulosonate from 3-deoxy-D-manno-octulosonate and CTP: step 1/1. It participates in bacterial outer membrane biogenesis; lipopolysaccharide biosynthesis. Activates KDO (a required 8-carbon sugar) for incorporation into bacterial lipopolysaccharide in Gram-negative bacteria. The polypeptide is 3-deoxy-manno-octulosonate cytidylyltransferase (Pectobacterium carotovorum subsp. carotovorum (strain PC1)).